The following is a 555-amino-acid chain: CTP synthase (555 aa).

The amidoligase domain stretch occupies residues 1–271 (MVKRGKKTKY…DDKLAELFNI (271 aa)). Serine 19 provides a ligand contact to CTP. Serine 19 contributes to the UTP binding site. ATP-binding positions include 20 to 25 (SLGKGL) and aspartate 77. Mg(2+) is bound by residues aspartate 77 and glutamate 145. Residues 152 to 154 (DIE), 192 to 197 (KTKPTQ), and lysine 228 each bind CTP. UTP contacts are provided by residues 192–197 (KTKPTQ) and lysine 228. One can recognise a Glutamine amidotransferase type-1 domain in the interval 297–537 (RIGIVGKYVE…VKAALEHRDA (241 aa)). Glycine 358 contributes to the L-glutamine binding site. Cysteine 385 (nucleophile; for glutamine hydrolysis) is an active-site residue. L-glutamine-binding positions include 386-389 (LGLQ), glutamate 409, and arginine 466. Active-site residues include histidine 510 and glutamate 512. The tract at residues 536–555 (DAQQRQPSAEVKKLPVGKNG) is disordered.

Belongs to the CTP synthase family. In terms of assembly, homotetramer.

The enzyme catalyses UTP + L-glutamine + ATP + H2O = CTP + L-glutamate + ADP + phosphate + 2 H(+). The catalysed reaction is L-glutamine + H2O = L-glutamate + NH4(+). It catalyses the reaction UTP + NH4(+) + ATP = CTP + ADP + phosphate + 2 H(+). Its pathway is pyrimidine metabolism; CTP biosynthesis via de novo pathway; CTP from UDP: step 2/2. Its activity is regulated as follows. Allosterically activated by GTP, when glutamine is the substrate; GTP has no effect on the reaction when ammonia is the substrate. The allosteric effector GTP functions by stabilizing the protein conformation that binds the tetrahedral intermediate(s) formed during glutamine hydrolysis. Inhibited by the product CTP, via allosteric rather than competitive inhibition. Functionally, catalyzes the ATP-dependent amination of UTP to CTP with either L-glutamine or ammonia as the source of nitrogen. Regulates intracellular CTP levels through interactions with the four ribonucleotide triphosphates. The sequence is that of CTP synthase from Anaeromyxobacter dehalogenans (strain 2CP-C).